We begin with the raw amino-acid sequence, 182 residues long: ATP synthase subunit delta (182 aa).

Belongs to the ATPase delta chain family. In terms of assembly, F-type ATPases have 2 components, F(1) - the catalytic core - and F(0) - the membrane proton channel. F(1) has five subunits: alpha(3), beta(3), gamma(1), delta(1), epsilon(1). F(0) has three main subunits: a(1), b(2) and c(10-14). The alpha and beta chains form an alternating ring which encloses part of the gamma chain. F(1) is attached to F(0) by a central stalk formed by the gamma and epsilon chains, while a peripheral stalk is formed by the delta and b chains.

It localises to the cell inner membrane. In terms of biological role, f(1)F(0) ATP synthase produces ATP from ADP in the presence of a proton or sodium gradient. F-type ATPases consist of two structural domains, F(1) containing the extramembraneous catalytic core and F(0) containing the membrane proton channel, linked together by a central stalk and a peripheral stalk. During catalysis, ATP synthesis in the catalytic domain of F(1) is coupled via a rotary mechanism of the central stalk subunits to proton translocation. This protein is part of the stalk that links CF(0) to CF(1). It either transmits conformational changes from CF(0) to CF(1) or is implicated in proton conduction. This is ATP synthase subunit delta from Sulfurihydrogenibium sp. (strain YO3AOP1).